A 394-amino-acid chain; its full sequence is Phosphoglycerate kinase (394 aa).

Substrate is bound by residues 21–23 (DFN), Arg36, 59–62 (HLGR), Arg118, and Arg151. Ser183 carries the post-translational modification Phosphoserine. ATP-binding residues include Lys201 and Gly292. Thr299 is modified (phosphothreonine). Residues Glu323 and 350-353 (GGDS) contribute to the ATP site.

This sequence belongs to the phosphoglycerate kinase family. As to quaternary structure, monomer.

The protein resides in the cytoplasm. It catalyses the reaction (2R)-3-phosphoglycerate + ATP = (2R)-3-phospho-glyceroyl phosphate + ADP. Its pathway is carbohydrate degradation; glycolysis; pyruvate from D-glyceraldehyde 3-phosphate: step 2/5. In Bacillus anthracis (strain A0248), this protein is Phosphoglycerate kinase.